Here is a 545-residue protein sequence, read N- to C-terminus: T-complex protein 1 subunit alpha (545 aa).

This sequence belongs to the TCP-1 chaperonin family. As to quaternary structure, heterooligomeric complex of about 850 to 900 kDa that forms two stacked rings, 12 to 16 nm in diameter.

The protein localises to the cytoplasm. Functionally, molecular chaperone; assists the folding of proteins upon ATP hydrolysis. Known to play a role, in vitro, in the folding of actin and tubulin. The sequence is that of T-complex protein 1 subunit alpha (TCP-1A) from Schistosoma mansoni (Blood fluke).